A 407-amino-acid chain; its full sequence is Tryptophan 2,3-dioxygenase B (407 aa).

Substrate-binding positions include 71–75 and Arg143; that span reads FIVTH. Position 327 (His327) interacts with heme. Position 341 (Thr341) interacts with substrate.

Belongs to the tryptophan 2,3-dioxygenase family. Homotetramer. Dimer of dimers. The cofactor is heme.

The enzyme catalyses L-tryptophan + O2 = N-formyl-L-kynurenine. It participates in amino-acid degradation; L-tryptophan degradation via kynurenine pathway; L-kynurenine from L-tryptophan: step 1/2. In terms of biological role, heme-dependent dioxygenase that catalyzes the oxidative cleavage of the L-tryptophan (L-Trp) pyrrole ring and converts L-tryptophan to N-formyl-L-kynurenine. Catalyzes the oxidative cleavage of the indole moiety. This chain is Tryptophan 2,3-dioxygenase B, found in Danio rerio (Zebrafish).